The following is a 156-amino-acid chain: Arginine repressor (156 aa).

The protein belongs to the ArgR family.

The protein resides in the cytoplasm. It participates in amino-acid biosynthesis; L-arginine biosynthesis [regulation]. In terms of biological role, regulates arginine biosynthesis genes. This Shewanella frigidimarina (strain NCIMB 400) protein is Arginine repressor.